We begin with the raw amino-acid sequence, 261 residues long: Type III pantothenate kinase (261 aa).

An ATP-binding site is contributed by 6–13; sequence DAGNSNIT. Substrate is bound by residues Y100 and 107-110; that span reads GADR. The Proton acceptor role is filled by D109. Residue D129 coordinates K(+). Residue T132 participates in ATP binding. T184 contributes to the substrate binding site.

This sequence belongs to the type III pantothenate kinase family. As to quaternary structure, homodimer. Requires NH4(+) as cofactor. The cofactor is K(+).

Its subcellular location is the cytoplasm. The enzyme catalyses (R)-pantothenate + ATP = (R)-4'-phosphopantothenate + ADP + H(+). Its pathway is cofactor biosynthesis; coenzyme A biosynthesis; CoA from (R)-pantothenate: step 1/5. Functionally, catalyzes the phosphorylation of pantothenate (Pan), the first step in CoA biosynthesis. The chain is Type III pantothenate kinase from Solibacter usitatus (strain Ellin6076).